The sequence spans 141 residues: Secreted RxLR effector protein 69 (141 aa).

The signal sequence occupies residues 1 to 19 (MHSSTILFVLGAAILAVNG). Residues 38–53 (RLLRSNLMKHETGEER) carry the RxLR-dEER motif. A glycan (N-linked (GlcNAc...) asparagine) is linked at Asn120.

It belongs to the RxLR effector family.

It is found in the secreted. It localises to the host nucleus. Secreted effector that completely suppresses the host cell death induced by cell death-inducing proteins. This Plasmopara viticola (Downy mildew of grapevine) protein is Secreted RxLR effector protein 69.